We begin with the raw amino-acid sequence, 407 residues long: 1-deoxy-D-xylulose 5-phosphate reductoisomerase (407 aa).

Threonine 25, glycine 26, serine 27, isoleucine 28, asparagine 53, and asparagine 136 together coordinate NADPH. Lysine 137 contributes to the 1-deoxy-D-xylulose 5-phosphate binding site. Glutamate 138 contacts NADPH. Aspartate 162 is a Mn(2+) binding site. Residues serine 163, glutamate 164, serine 188, and histidine 211 each coordinate 1-deoxy-D-xylulose 5-phosphate. Glutamate 164 lines the Mn(2+) pocket. Glycine 217 contributes to the NADPH binding site. Residues serine 224, asparagine 229, lysine 230, and glutamate 233 each contribute to the 1-deoxy-D-xylulose 5-phosphate site. Mn(2+) is bound at residue glutamate 233.

The protein belongs to the DXR family. Mg(2+) serves as cofactor. The cofactor is Mn(2+).

The catalysed reaction is 2-C-methyl-D-erythritol 4-phosphate + NADP(+) = 1-deoxy-D-xylulose 5-phosphate + NADPH + H(+). The protein operates within isoprenoid biosynthesis; isopentenyl diphosphate biosynthesis via DXP pathway; isopentenyl diphosphate from 1-deoxy-D-xylulose 5-phosphate: step 1/6. Catalyzes the NADPH-dependent rearrangement and reduction of 1-deoxy-D-xylulose-5-phosphate (DXP) to 2-C-methyl-D-erythritol 4-phosphate (MEP). The protein is 1-deoxy-D-xylulose 5-phosphate reductoisomerase of Afipia carboxidovorans (strain ATCC 49405 / DSM 1227 / KCTC 32145 / OM5) (Oligotropha carboxidovorans).